The chain runs to 321 residues: Phospholipid phosphatase-related protein type 5 (321 aa).

Helical transmembrane passes span 6–26 (VALI…TVML), 62–82 (AVPP…VIIV), 122–142 (FLGI…AGQV), 196–213 (AALS…ITST), 225–245 (VLCL…VAEY), and 252–272 (VIAG…CVVN).

This sequence belongs to the PA-phosphatase related phosphoesterase family.

The protein resides in the cell membrane. Induces filopodia formation and promotes neurite growth in a CDC42-independent manner; impedes neurite growth inhibitory-mediated axonal retraction. The polypeptide is Phospholipid phosphatase-related protein type 5 (Mus musculus (Mouse)).